The sequence spans 198 residues: IMP cyclohydrolase (198 aa).

It belongs to the archaeal IMP cyclohydrolase family.

The enzyme catalyses IMP + H2O = 5-formamido-1-(5-phospho-D-ribosyl)imidazole-4-carboxamide. It participates in purine metabolism; IMP biosynthesis via de novo pathway; IMP from 5-formamido-1-(5-phospho-D-ribosyl)imidazole-4-carboxamide: step 1/1. Functionally, catalyzes the cyclization of 5-formylamidoimidazole-4-carboxamide ribonucleotide to IMP. The sequence is that of IMP cyclohydrolase from Methanopyrus kandleri (strain AV19 / DSM 6324 / JCM 9639 / NBRC 100938).